The primary structure comprises 146 residues: Large ribosomal subunit protein uL15 (146 aa).

Over residues 1–18 (MKLHELKPTPGSRHERNR) the composition is skewed to basic and acidic residues. Residues 1–69 (MKLHELKPTP…RLPKRGFNNP (69 aa)) form a disordered region. Residues 42 to 52 (SGGGVRPGFEG) are compositionally biased toward gly residues.

The protein belongs to the universal ribosomal protein uL15 family. Part of the 50S ribosomal subunit.

Binds to the 23S rRNA. The polypeptide is Large ribosomal subunit protein uL15 (Exiguobacterium sp. (strain ATCC BAA-1283 / AT1b)).